The primary structure comprises 1079 residues: Psi-producing oxygenase A (1079 aa).

The interval 105 to 446 (TNTFLTTLWN…DGSYDDNDLV (342 aa)) is linoleate 8R-lipoxygenase. Heme b is bound at residue histidine 202. The active site involves tyrosine 374. A heme b-binding site is contributed by histidine 377. A 9,12-octadecadienoate 8-hydroperoxide 8R-isomerase region spans residues 654-1079 (QFINSHSACM…WDGDLPEVKE (426 aa)).

The protein belongs to the peroxidase family. In terms of assembly, homotetramer. The cofactor is heme b.

The enzyme catalyses (9Z,12Z)-octadecadienoate + O2 = (8R,9Z,12Z)-8-hydroperoxyoctadeca-9,12-dienoate. It catalyses the reaction (8R,9Z,12Z)-8-hydroperoxyoctadeca-9,12-dienoate = (5S,8R,9Z,12Z)-5,8-dihydroxyoctadeca-9,12-dienoate. Bifunctional heme-containing enzyme that oxidizes linoleic acid to (8R,9Z,12Z)-8-hydroperoxyoctadeca-9,12-dienoate (within the N-terminal heme peroxidase domain), which is subsequently isomerized to (5S,8R,9Z,12Z)-5,8-dihydroxyoctadeca-9,12-dienoate (within the C-terminal P450 heme thiolate domain). Oxidized unsaturated fatty acids, so-called oxylipins, derived from endogenous fatty acids, influence the development of the asexual conidiophores and sexual cleistothecia and regulate the secondary metabolism. These substances were collectively named psi factors and are primarily a mixture of hydroxylated oleic, linoleic and alpha-linolenic acids. They are termed psi-beta, psi-alpha, and psi-gamma, respectively. Oxylipins may also serve as activators of mammalian immune responses contributing to enhanced resistance to opportunistic fungi and as factors that modulate fungal development contributing to resistance to host defenses. This Aspergillus fumigatus (strain ATCC MYA-4609 / CBS 101355 / FGSC A1100 / Af293) (Neosartorya fumigata) protein is Psi-producing oxygenase A (ppoA).